Here is a 793-residue protein sequence, read N- to C-terminus: Peroxidase-like protein (793 aa).

Positions 1 to 20 (MNLFICHVFLLLLHGYLIIC) are cleaved as a signal peptide.

The protein belongs to the peroxidase family. As to expression, prismatic layer of shell (at protein level). Expressed primarily in the mantle with highest level in the mantle edge and lower level in the mantle pallium.

It is found in the secreted. In Margaritifera margaritifera (Freshwater pearl mussel), this protein is Peroxidase-like protein.